We begin with the raw amino-acid sequence, 346 residues long: D-alanine--D-alanine ligase (346 aa).

Residues 133-327 form the ATP-grasp domain; sequence KLYAKSVGVK…ALADQISLEK (195 aa). 159–211 is an ATP binding site; sequence LSFPCIIKPARLGSSIGISIVKDEKDLEYAKDVGFEFDNDLVVEEFKNNIKEY. Mg(2+)-binding residues include D284, E296, and N298.

This sequence belongs to the D-alanine--D-alanine ligase family. Requires Mg(2+) as cofactor. Mn(2+) serves as cofactor.

It localises to the cytoplasm. The catalysed reaction is 2 D-alanine + ATP = D-alanyl-D-alanine + ADP + phosphate + H(+). Its pathway is cell wall biogenesis; peptidoglycan biosynthesis. Functionally, cell wall formation. The chain is D-alanine--D-alanine ligase from Campylobacter jejuni subsp. jejuni serotype O:23/36 (strain 81-176).